The sequence spans 322 residues: 4-hydroxy-3-methylbut-2-enyl diphosphate reductase (322 aa).

Cys-15 contributes to the [4Fe-4S] cluster binding site. (2E)-4-hydroxy-3-methylbut-2-enyl diphosphate-binding residues include His-44 and His-77. Residues His-44 and His-77 each coordinate dimethylallyl diphosphate. Residues His-44 and His-77 each contribute to the isopentenyl diphosphate site. Position 99 (Cys-99) interacts with [4Fe-4S] cluster. A (2E)-4-hydroxy-3-methylbut-2-enyl diphosphate-binding site is contributed by His-127. Dimethylallyl diphosphate is bound at residue His-127. His-127 serves as a coordination point for isopentenyl diphosphate. Glu-129 serves as the catalytic Proton donor. Thr-168 provides a ligand contact to (2E)-4-hydroxy-3-methylbut-2-enyl diphosphate. Cys-198 contributes to the [4Fe-4S] cluster binding site. (2E)-4-hydroxy-3-methylbut-2-enyl diphosphate-binding residues include Ser-226, Ser-227, Asn-228, and Ser-270. Positions 226, 227, 228, and 270 each coordinate dimethylallyl diphosphate. 4 residues coordinate isopentenyl diphosphate: Ser-226, Ser-227, Asn-228, and Ser-270.

This sequence belongs to the IspH family. [4Fe-4S] cluster is required as a cofactor.

The catalysed reaction is isopentenyl diphosphate + 2 oxidized [2Fe-2S]-[ferredoxin] + H2O = (2E)-4-hydroxy-3-methylbut-2-enyl diphosphate + 2 reduced [2Fe-2S]-[ferredoxin] + 2 H(+). It catalyses the reaction dimethylallyl diphosphate + 2 oxidized [2Fe-2S]-[ferredoxin] + H2O = (2E)-4-hydroxy-3-methylbut-2-enyl diphosphate + 2 reduced [2Fe-2S]-[ferredoxin] + 2 H(+). Its pathway is isoprenoid biosynthesis; dimethylallyl diphosphate biosynthesis; dimethylallyl diphosphate from (2E)-4-hydroxy-3-methylbutenyl diphosphate: step 1/1. It participates in isoprenoid biosynthesis; isopentenyl diphosphate biosynthesis via DXP pathway; isopentenyl diphosphate from 1-deoxy-D-xylulose 5-phosphate: step 6/6. Functionally, catalyzes the conversion of 1-hydroxy-2-methyl-2-(E)-butenyl 4-diphosphate (HMBPP) into a mixture of isopentenyl diphosphate (IPP) and dimethylallyl diphosphate (DMAPP). Acts in the terminal step of the DOXP/MEP pathway for isoprenoid precursor biosynthesis. This Neisseria gonorrhoeae (strain ATCC 700825 / FA 1090) protein is 4-hydroxy-3-methylbut-2-enyl diphosphate reductase.